The primary structure comprises 223 residues: Phosphoglycolate phosphatase (223 aa).

The Nucleophile role is filled by aspartate 10. Residues aspartate 10 and aspartate 12 each contribute to the Mg(2+) site. Lysine 149 provides a ligand contact to substrate. Mg(2+) contacts are provided by aspartate 172 and aspartate 176.

Belongs to the archaeal SPP-like hydrolase family. Requires Mg(2+) as cofactor.

The enzyme catalyses 2-phosphoglycolate + H2O = glycolate + phosphate. In terms of biological role, catalyzes the dephosphorylation of 2-phosphoglycolate. This Archaeoglobus fulgidus (strain ATCC 49558 / DSM 4304 / JCM 9628 / NBRC 100126 / VC-16) protein is Phosphoglycolate phosphatase.